A 146-amino-acid polypeptide reads, in one-letter code: D-aminoacyl-tRNA deacylase (146 aa).

The Gly-cisPro motif, important for rejection of L-amino acids motif lies at 137-138; sequence GP.

This sequence belongs to the DTD family. As to quaternary structure, homodimer.

The protein localises to the cytoplasm. The enzyme catalyses glycyl-tRNA(Ala) + H2O = tRNA(Ala) + glycine + H(+). It catalyses the reaction a D-aminoacyl-tRNA + H2O = a tRNA + a D-alpha-amino acid + H(+). Functionally, an aminoacyl-tRNA editing enzyme that deacylates mischarged D-aminoacyl-tRNAs. Also deacylates mischarged glycyl-tRNA(Ala), protecting cells against glycine mischarging by AlaRS. Acts via tRNA-based rather than protein-based catalysis; rejects L-amino acids rather than detecting D-amino acids in the active site. By recycling D-aminoacyl-tRNA to D-amino acids and free tRNA molecules, this enzyme counteracts the toxicity associated with the formation of D-aminoacyl-tRNA entities in vivo and helps enforce protein L-homochirality. This chain is D-aminoacyl-tRNA deacylase, found in Hahella chejuensis (strain KCTC 2396).